We begin with the raw amino-acid sequence, 179 residues long: DELTA-actitoxin-Afr1c (179 aa).

An N-terminal alpha-helix that contributes to the pore region spans residues 1 to 29 (SAEVAGAIIDGASLTFDVLQTVLKALGDV). Residues 11 to 30 (GASLTFDVLQTVLKALGDVS) form an N-terminal region region. Arg-31 contributes to the an N-(acyl)-sphingosylphosphocholine binding site. Residues Tyr-51 and Arg-53 each coordinate N-acetyl-D-glucosamine 6-sulfate. An N-(acyl)-sphingosylphosphocholine contacts are provided by Arg-53, Ser-54, Arg-79, Gly-85, Tyr-113, Ser-114, Trp-116, Tyr-133, Tyr-137, Tyr-138, Arg-144, and Gly-168. Residues 105–120 (SIPFDYNLYSNWWNVK) are trp-rich region, which is important for the binding to lipid membrane. Tyr-138 provides a ligand contact to N-acetyl-D-glucosamine 6-sulfate. The short motif at 144-146 (RGD) is the Cell attachment site, crucial for protein stability element.

Belongs to the actinoporin family. Sea anemone subfamily. In terms of assembly, octamer or nonamer in membranes. Monomer in the soluble state.

The protein resides in the secreted. The protein localises to the nematocyst. It is found in the target cell membrane. In terms of biological role, pore-forming toxin (PFT) that consists of a crown-shaped octamer or nonamer that forms cation-selective hydrophilic pores of about 1.5 nm (inside) and 13 nm (outside) and causes cytolysis. It causes cardiac stimulation. Also causes hemolysis (HC(50)=0.3 nM). Interestingly, the Phe-16 is crucial for hemolysis. Pore formation is a multi-step process that involves specific recognition of membrane sphingomyelin (but neither cholesterol nor phosphatidylcholine) using aromatic rich region and adjacent phosphocholine (POC) binding site, firm binding to the membrane (mainly driven by hydrophobic interactions) accompanied by the transfer of the N-terminal region to the lipid-water interface and finally pore formation after oligomerization of monomers. It is probable that a dimeric form is an assembly intermediate before the complete oligomerization. The formation of stable pores occurs only in vesicles composed of DOPC/SM (there is no oligomerization when the PFT is treated with vesicles of DOPC or SM alone). The transmembrane pore displays 8 lateral perforations, one at each subunit-subunit interface, partially occupied by the acyl-chain region of a bridging lipid. Each pore contains 24 lipid molecules, firmly bound to each subunit, that is, 3 lipids (L1, L2, L3, L4 and/or L5) are associated to each subunit. Lipid L1 bridges 2 subunits, whereas lipids L2 and L3 bind to sites at single subunit. This Actinia fragacea (Strawberry anemone) protein is DELTA-actitoxin-Afr1c.